The chain runs to 247 residues: Putative cyclin-T1-1 (247 aa).

Belongs to the cyclin family. Cyclin T subfamily.

This Arabidopsis thaliana (Mouse-ear cress) protein is Putative cyclin-T1-1 (CYCT1-1).